The sequence spans 83 residues: MKLMCMMIVAVLFLTAWTFVTADDSINGPENRRIWEKLLSKTRDEMKNPEASKLNKKECRQPGEFCFPVVAKCCGGTCLVICI.

An N-terminal signal peptide occupies residues 1-22 (MKLMCMMIVAVLFLTAWTFVTA). A propeptide spanning residues 23–55 (DDSINGPENRRIWEKLLSKTRDEMKNPEASKLN) is cleaved from the precursor. 3 disulfides stabilise this stretch: Cys59–Cys74, Cys66–Cys78, and Cys73–Cys82.

This sequence belongs to the conotoxin O1 superfamily. Expressed by the venom duct.

The protein resides in the secreted. The sequence is that of Conotoxin VnMKLT1-022 from Conus ventricosus (Mediterranean cone).